The chain runs to 173 residues: uncharacterized protein (173 aa).

Residues 1-15 constitute a propeptide, leader sequence; the sequence is MERKLSQRAGNTFKG. F16 carries the post-translational modification N-methylphenylalanine. A helical transmembrane segment spans residues 16–37; it reads FTLVEVLITLAIISLVFSLILI.

Its subcellular location is the membrane. This is an uncharacterized protein from Aquifex aeolicus (strain VF5).